The chain runs to 871 residues: Alanine--tRNA ligase (871 aa).

Zn(2+) contacts are provided by His-561, His-565, Cys-662, and His-666.

This sequence belongs to the class-II aminoacyl-tRNA synthetase family. Zn(2+) serves as cofactor.

Its subcellular location is the cytoplasm. It carries out the reaction tRNA(Ala) + L-alanine + ATP = L-alanyl-tRNA(Ala) + AMP + diphosphate. Its function is as follows. Catalyzes the attachment of alanine to tRNA(Ala) in a two-step reaction: alanine is first activated by ATP to form Ala-AMP and then transferred to the acceptor end of tRNA(Ala). Also edits incorrectly charged Ser-tRNA(Ala) and Gly-tRNA(Ala) via its editing domain. This Dechloromonas aromatica (strain RCB) protein is Alanine--tRNA ligase.